The chain runs to 403 residues: Dihydroorotase (403 aa).

Zn(2+) is bound by residues His48 and His50. Residues 50–52 (HLR) and Asn82 each bind substrate. Positions 140, 172, 211, and 277 each coordinate Zn(2+). Asp277 is an active-site residue. His281 contributes to the substrate binding site.

This sequence belongs to the metallo-dependent hydrolases superfamily. DHOase family. Class I DHOase subfamily. Zn(2+) serves as cofactor.

The enzyme catalyses (S)-dihydroorotate + H2O = N-carbamoyl-L-aspartate + H(+). It functions in the pathway pyrimidine metabolism; UMP biosynthesis via de novo pathway; (S)-dihydroorotate from bicarbonate: step 3/3. Functionally, catalyzes the reversible cyclization of carbamoyl aspartate to dihydroorotate. The sequence is that of Dihydroorotase from Archaeoglobus fulgidus (strain ATCC 49558 / DSM 4304 / JCM 9628 / NBRC 100126 / VC-16).